The chain runs to 431 residues: Adenylosuccinate synthetase (431 aa).

GTP-binding positions include 12–18 (GDEGKGK) and 40–42 (GHT). D13 (proton acceptor) is an active-site residue. 2 residues coordinate Mg(2+): D13 and G40. Residues 13–16 (DEGK), 38–41 (NAGH), T130, R144, Q224, T239, and R303 contribute to the IMP site. H41 (proton donor) is an active-site residue. Substrate is bound at residue 299-305 (STTGRPR). Residues R305, 331-333 (KAD), and 413-415 (SIG) contribute to the GTP site.

This sequence belongs to the adenylosuccinate synthetase family. In terms of assembly, homodimer. Requires Mg(2+) as cofactor.

It is found in the cytoplasm. It carries out the reaction IMP + L-aspartate + GTP = N(6)-(1,2-dicarboxyethyl)-AMP + GDP + phosphate + 2 H(+). It functions in the pathway purine metabolism; AMP biosynthesis via de novo pathway; AMP from IMP: step 1/2. Its function is as follows. Plays an important role in the de novo pathway of purine nucleotide biosynthesis. Catalyzes the first committed step in the biosynthesis of AMP from IMP. The protein is Adenylosuccinate synthetase of Cytophaga hutchinsonii (strain ATCC 33406 / DSM 1761 / CIP 103989 / NBRC 15051 / NCIMB 9469 / D465).